A 299-amino-acid chain; its full sequence is Protease HtpX homolog (299 aa).

The next 2 helical transmembrane spans lie at 15 to 35 (ILLLVFFLLLALVGYAVGYLF) and 39 to 59 (GLGGLVIALIIGFIYALSMIF). Residue His-143 coordinates Zn(2+). The active site involves Glu-144. His-147 contacts Zn(2+). Transmembrane regions (helical) follow at residues 158–178 (IAVALASAITMLSSMAGRMMW) and 198–218 (IIMLVVSLLAIVLAPLAATLV). Glu-227 contacts Zn(2+).

The protein belongs to the peptidase M48B family. The cofactor is Zn(2+).

Its subcellular location is the cell membrane. The chain is Protease HtpX homolog from Streptococcus pneumoniae serotype 4 (strain ATCC BAA-334 / TIGR4).